Here is a 515-residue protein sequence, read N- to C-terminus: Elongation factor 1-alpha S (515 aa).

A tr-type G domain is found at 5 to 258 (KTHINLVVIG…DAMKPPKRPT (254 aa)). Residues 14-21 (GHVDAGKS) are G1. Residue 14–21 (GHVDAGKS) participates in GTP binding. K55 carries the N6,N6-dimethyllysine modification. The G2 stretch occupies residues 70-74 (GITID). The residue at position 79 (K79) is an N6,N6,N6-trimethyllysine. A G3 region spans residues 91–94 (DAPG). GTP contacts are provided by residues 91–95 (DAPGH) and 151–154 (NKMD). Positions 151 to 154 (NKMD) are G4. The interval 187 to 206 (KKDKGDKKKGDKKEKKDKKD) is disordered. The segment covering 189–206 (DKGDKKKGDKKEKKDKKD) has biased composition (basic and acidic residues). Residues 222–224 (SGW) form a G5 region. Residue K289 is modified to N6-methyllysine. K334 carries the post-translational modification N6,N6,N6-trimethyllysine. The interval 396–419 (KRGKQTHDVSDDTEWATKDDAEPR) is disordered. Positions 398–419 (GKQTHDVSDDTEWATKDDAEPR) are enriched in basic and acidic residues. N6,N6,N6-trimethyllysine is present on K441.

It belongs to the TRAFAC class translation factor GTPase superfamily. Classic translation factor GTPase family. EF-Tu/EF-1A subfamily.

It is found in the cytoplasm. Its function is as follows. This protein promotes the GTP-dependent binding of aminoacyl-tRNA to the A-site of ribosomes during protein biosynthesis. This is Elongation factor 1-alpha S (TEF-S) from Porphyra purpurea (Red seaweed).